The sequence spans 123 residues: Keratin-associated protein 2-2 (123 aa).

Residues 5–112 form an 11 X 5 AA repeats of C-C-[CDPQRWG]-[APRS]-[CIPSTVD] region; sequence CCGSTFSSLS…SVQSPCGQPT (108 aa).

Belongs to the KRTAP type 2 family. Interacts with hair keratins.

Functionally, in the hair cortex, hair keratin intermediate filaments are embedded in an interfilamentous matrix, consisting of hair keratin-associated proteins (KRTAP), which are essential for the formation of a rigid and resistant hair shaft through their extensive disulfide bond cross-linking with abundant cysteine residues of hair keratins. The matrix proteins include the high-sulfur and high-glycine-tyrosine keratins. The sequence is that of Keratin-associated protein 2-2 (KRTAP2-2) from Homo sapiens (Human).